We begin with the raw amino-acid sequence, 407 residues long: Myeloid cell nuclear differentiation antigen (407 aa).

The region spanning 1 to 88 is the Pyrin domain; sequence MVNEYKKILL…VNNLRKEKSK (88 aa). Positions 108-207 are disordered; the sequence is EVGLAAPAPT…RQVDARRNVP (100 aa). Positions 131 to 137 match the Nuclear localization signal motif; sequence PVAQKRK. Positions 139 to 148 are enriched in basic and acidic residues; it reads PNKEKTEAKR. A compositionally biased stretch (low complexity) spans 177-190; sequence QTSSSTPSNTSFTP. Residues 196 to 394 enclose the HIN-200 domain; sequence AQRQVDARRN…CGSHSFIKVI (199 aa).

As to quaternary structure, participates in a ternary complex with YY1 and the YY1 target DNA element. Binds nucleolin and nucleophosmin/NPM/B23. As to expression, expressed constitutively in cells of the myeloid lineage. Found in promyelocyte stage cells as well as in all other stage cells including peripheral blood monocytes and granulocytes. Also appears in myeloblast cells in some cases of acute myeloid Leukemia.

Its subcellular location is the nucleus. The protein resides in the cytoplasm. May act as a transcriptional activator/repressor in the myeloid lineage. Plays a role in the granulocyte/monocyte cell-specific response to interferon. Stimulates the DNA binding of the transcriptional repressor protein YY1. This chain is Myeloid cell nuclear differentiation antigen (MNDA), found in Homo sapiens (Human).